A 223-amino-acid polypeptide reads, in one-letter code: Phosphoribosylformylglycinamidine synthase subunit PurQ (223 aa).

Residues Lys4–Ala223 enclose the Glutamine amidotransferase type-1 domain. The active-site Nucleophile is Cys87. Active-site residues include His195 and Glu197.

In terms of assembly, part of the FGAM synthase complex composed of 1 PurL, 1 PurQ and 2 PurS subunits.

The protein localises to the cytoplasm. It catalyses the reaction N(2)-formyl-N(1)-(5-phospho-beta-D-ribosyl)glycinamide + L-glutamine + ATP + H2O = 2-formamido-N(1)-(5-O-phospho-beta-D-ribosyl)acetamidine + L-glutamate + ADP + phosphate + H(+). The enzyme catalyses L-glutamine + H2O = L-glutamate + NH4(+). Its pathway is purine metabolism; IMP biosynthesis via de novo pathway; 5-amino-1-(5-phospho-D-ribosyl)imidazole from N(2)-formyl-N(1)-(5-phospho-D-ribosyl)glycinamide: step 1/2. Its function is as follows. Part of the phosphoribosylformylglycinamidine synthase complex involved in the purines biosynthetic pathway. Catalyzes the ATP-dependent conversion of formylglycinamide ribonucleotide (FGAR) and glutamine to yield formylglycinamidine ribonucleotide (FGAM) and glutamate. The FGAM synthase complex is composed of three subunits. PurQ produces an ammonia molecule by converting glutamine to glutamate. PurL transfers the ammonia molecule to FGAR to form FGAM in an ATP-dependent manner. PurS interacts with PurQ and PurL and is thought to assist in the transfer of the ammonia molecule from PurQ to PurL. The chain is Phosphoribosylformylglycinamidine synthase subunit PurQ from Corynebacterium efficiens (strain DSM 44549 / YS-314 / AJ 12310 / JCM 11189 / NBRC 100395).